The primary structure comprises 278 residues: Large ribosomal subunit protein uL2 (278 aa).

Residues 201 to 278 (HGNINDGKAG…IMRSRHQKKK (78 aa)) form a disordered region. Residues 210 to 221 (GRSRWRGKRPHV) show a composition bias toward basic residues.

Belongs to the universal ribosomal protein uL2 family. In terms of assembly, part of the 50S ribosomal subunit. Forms a bridge to the 30S subunit in the 70S ribosome.

Functionally, one of the primary rRNA binding proteins. Required for association of the 30S and 50S subunits to form the 70S ribosome, for tRNA binding and peptide bond formation. It has been suggested to have peptidyltransferase activity; this is somewhat controversial. Makes several contacts with the 16S rRNA in the 70S ribosome. The polypeptide is Large ribosomal subunit protein uL2 (Allorhizobium ampelinum (strain ATCC BAA-846 / DSM 112012 / S4) (Agrobacterium vitis (strain S4))).